The primary structure comprises 245 residues: Dehydrogenase/reductase SDR family member 6 (245 aa).

NAD(+)-binding positions include 16 to 18 (QGI), Asp-37, and Asp-58. A substrate-binding site is contributed by Arg-144. Residue Tyr-147 is the Proton acceptor of the active site. NAD(+) contacts are provided by residues Lys-151 and 180 to 184 (VDTPS). Substrate-binding residues include Arg-188 and Arg-205.

Belongs to the short-chain dehydrogenases/reductases (SDR) family. As to quaternary structure, homotetramer.

The protein localises to the cytoplasm. It catalyses the reaction cis-4-hydroxy-L-proline + NAD(+) = 4-oxo-L-proline + NADH + H(+). The catalysed reaction is (R)-3-hydroxybutanoate + NAD(+) = acetoacetate + NADH + H(+). The protein operates within amino-acid metabolism. It participates in siderophore biosynthesis. Functionally, NAD(H)-dependent dehydrogenase/reductase with a preference for cyclic substrates. Catalyzes stereoselective conversion of 4-oxo-L-proline to cis-4-hydroxy-L-proline, likely a detoxification mechanism for ketoprolines. Mediates the formation of 2,5-dihydroxybenzoate (2,5-DHBA), a siderophore that chelates free cytoplasmic iron, thereby regulating iron transport and homeostasis while protecting cells against free radical-induced oxidative stress. The iron-siderophore complex is imported into mitochondria, providing an iron source for mitochondrial metabolic processes in particular heme synthesis. May act as a 3-hydroxybutyrate dehydrogenase. This chain is Dehydrogenase/reductase SDR family member 6 (bdh2), found in Danio rerio (Zebrafish).